Consider the following 437-residue polypeptide: mRNA cleavage and polyadenylation factor CLP1 (437 aa).

ATP contacts are provided by residues E23 and 122–127; that span reads STGKSS.

Belongs to the Clp1 family. Clp1 subfamily. In terms of assembly, component of a pre-mRNA cleavage factor complex. Interacts directly with PCF11.

Its subcellular location is the nucleus. Its function is as follows. Required for endonucleolytic cleavage during polyadenylation-dependent pre-mRNA 3'-end formation. The chain is mRNA cleavage and polyadenylation factor CLP1 from Kluyveromyces lactis (strain ATCC 8585 / CBS 2359 / DSM 70799 / NBRC 1267 / NRRL Y-1140 / WM37) (Yeast).